The primary structure comprises 1229 residues: ABC transporter B family member 22 (1229 aa).

Transmembrane regions (helical) follow at residues 22–42 (MGLG…IFFI), 69–89 (VALL…GYCW), 145–167 (LPNF…IMLW), 171–193 (IVGF…ALIN), 251–271 (GIAI…TWYG), and 274–294 (MVMY…CITY). Residues 22-311 (MGLGLIGAVG…GLSNLKYFSE (290 aa)) form the ABC transmembrane type-1 1 domain. Residues 346 to 582 (VQFKHVKFMY…VDGQYTSLVR (237 aa)) enclose the ABC transporter 1 domain. 381-388 (GGSGSGKS) lines the ATP pocket. 2 N-linked (GlcNAc...) asparagine glycosylation sites follow: N529 and N594. Transmembrane regions (helical) follow at residues 661–681 (ALYG…YAYA) and 703–723 (IYVL…IIQQ). The region spanning 661-949 (ALYGCLSAVL…AGAMTMDLAK (289 aa)) is the ABC transmembrane type-1 2 domain. N758 is a glycosylation site (N-linked (GlcNAc...) asparagine). 4 helical membrane passes run 782-800 (VSLL…TLGL), 807-823 (SIVM…CFYT), 885-908 (WLAG…NYWY), and 923-943 (FFEL…AGAM). An ABC transporter 2 domain is found at 984 to 1222 (IKFVNVDFAY…GPTGVYFSLV (239 aa)). N-linked (GlcNAc...) asparagine glycosylation is present at N1004. ATP is bound at residue 1019-1026 (GPSGSGKS). N1157 carries an N-linked (GlcNAc...) asparagine glycan.

Belongs to the ABC transporter superfamily. ABCB family. Multidrug resistance exporter (TC 3.A.1.201) subfamily.

It is found in the membrane. The protein is ABC transporter B family member 22 (ABCB22) of Arabidopsis thaliana (Mouse-ear cress).